A 545-amino-acid polypeptide reads, in one-letter code: Myotubularin-related protein 9 (545 aa).

Methionine 1 carries the N-acetylmethionine modification. The GRAM domain maps to 4–99; sequence AELIKTPRVD…LNIASSIEAL (96 aa). The Myotubularin phosphatase domain maps to 123 to 498; the sequence is GWHSFLPEQE…QSLQLWEGIF (376 aa). Residues 508-542 adopt a coiled-coil conformation; sequence LDEAYEEMVNIIEYNKELQAKVNVLRRQLAELETE.

This sequence belongs to the protein-tyrosine phosphatase family. Non-receptor class myotubularin subfamily. In terms of assembly, homodimer. Heterodimer (via C-terminus) with lipid phosphatase MTMR6 (via C-terminus). Heterodimer (via coiled coil domain) with lipid phosphatase MTMR7 (via C-terminus).

It is found in the cytoplasm. The protein localises to the cell projection. The protein resides in the ruffle membrane. It localises to the perinuclear region. Its subcellular location is the endoplasmic reticulum. Functionally, acts as an adapter for myotubularin-related phosphatases. Increases lipid phosphatase MTMR6 catalytic activity, specifically towards phosphatidylinositol 3,5-bisphosphate, and MTMR6 binding affinity for phosphorylated phosphatidylinositols. Positively regulates lipid phosphatase MTMR7 catalytic activity. The formation of the MTMR6-MTMR9 complex, stabilizes both MTMR6 and MTMR9 protein levels. Plays a role in the late stages of macropinocytosis possibly by regulating MTMR6-mediated dephosphorylation of phosphatidylinositol 3-phosphate in membrane ruffles. Negatively regulates DNA damage-induced apoptosis, in part via its association with MTMR6. Does not bind mono-, di- and tri-phosphorylated phosphatidylinositols, phosphatidic acid and phosphatidylserine. This is Myotubularin-related protein 9 (Mtmr9) from Mus musculus (Mouse).